We begin with the raw amino-acid sequence, 514 residues long: GMP synthase [glutamine-hydrolyzing] (514 aa).

The 191-residue stretch at 7 to 197 folds into the Glutamine amidotransferase type-1 domain; sequence KVLILDFGSQ…LFNICKCERN (191 aa). The active-site Nucleophile is Cys-84. Residues His-171 and Glu-173 contribute to the active site. Residues 198–389 form the GMPS ATP-PPase domain; sequence WNMGSFIEYE…LKLPEDIVYR (192 aa). Residue 225–231 participates in ATP binding; it reads SGGVDSS.

In terms of assembly, homodimer.

The enzyme catalyses XMP + L-glutamine + ATP + H2O = GMP + L-glutamate + AMP + diphosphate + 2 H(+). It participates in purine metabolism; GMP biosynthesis; GMP from XMP (L-Gln route): step 1/1. In terms of biological role, catalyzes the synthesis of GMP from XMP. The protein is GMP synthase [glutamine-hydrolyzing] of Brachyspira hyodysenteriae (strain ATCC 49526 / WA1).